The following is a 153-amino-acid chain: Ribosome maturation factor RimP (153 aa).

This sequence belongs to the RimP family.

It is found in the cytoplasm. In terms of biological role, required for maturation of 30S ribosomal subunits. The protein is Ribosome maturation factor RimP of Picosynechococcus sp. (strain ATCC 27264 / PCC 7002 / PR-6) (Agmenellum quadruplicatum).